A 310-amino-acid polypeptide reads, in one-letter code: MKITVIGAGNVGATTAFRLAEKQLARELVLLDVVEGIPQGKALDMYESGPVGLFDTKVTGSNDYADTANSDIVVITAGLPRKPGMTREDLLSMNAGIVREVTGRIMEHSKNPIIVVVSNPLDIMTHVAWQKSGLPKERVIGMAGVLDSARFRSFIAMELGVSMQDVTACVLGGHGDAMVPVVKYTTVAGIPVADLISAERIAELVERTRTGGAEIVNHLKQGSAFYAPATSVVEMVESIVLDRKRVLTCAVSLDGQYGIDGTFVGVPVKLGKNGVEHIYEIKLDQSDLDLLQKSAKIVDENCKMLDASQG.

NAD(+) is bound by residues 7–12 (GAGNVG) and D32. Substrate contacts are provided by R81 and R87. NAD(+)-binding positions include N94 and 117–119 (VSN). Substrate is bound by residues N119 and R150. H174 (proton acceptor) is an active-site residue.

It belongs to the LDH/MDH superfamily. MDH type 3 family. In terms of assembly, homotetramer; arranged as a dimer of dimers.

The enzyme catalyses (S)-malate + NAD(+) = oxaloacetate + NADH + H(+). Catalyzes the reversible oxidation of malate to oxaloacetate. This chain is Malate dehydrogenase, found in Chlorobaculum tepidum (strain ATCC 49652 / DSM 12025 / NBRC 103806 / TLS) (Chlorobium tepidum).